Consider the following 84-residue polypeptide: Small ribosomal subunit protein bS16 (84 aa).

This sequence belongs to the bacterial ribosomal protein bS16 family.

The sequence is that of Small ribosomal subunit protein bS16 from Burkholderia ambifaria (strain MC40-6).